The following is a 317-amino-acid chain: U5 small nuclear ribonucleoprotein TSSC4 (317 aa).

The segment covering 1–19 (MAETEAGLEVEEPTEDDTL) has biased composition (acidic residues). Residues 1-78 (MAETEAGLEV…IPTTAVQPFH (78 aa)) are disordered. Residues 20–37 (PSDTVSLSDSDSDLSLPS) show a composition bias toward low complexity. 4 positions are modified to phosphoserine: Ser-57, Ser-64, Ser-83, and Ser-92. Positions 74-101 (VQPFHLRGMSSTFSQRSHSIFDCLESAA) are hom2; mediates interaction with the U5 snRNP complexes and required for spliceosomal tri-snRNP complex assembly. The disordered stretch occupies residues 123 to 151 (VAPPSQTPARSLSRVHGNTDPTRVHPVPD). Residues 146–300 (VHPVPDYVSH…SKKRSRDHFR (155 aa)) form an interaction with SNRNP200 region. The interval 147-183 (HPVPDYVSHPERWTKYSLEDVSETSEQSNRDAALAFL) is hom3; mediates interaction with the U5 snRNP complexes. The interval 198-238 (FNQDPSSCGEGRVVFTKPVRGSEARAERKRVLKKGVVSGAG) is hom4; necessary for interaction with the PRPF19 complex and required for spliceosomal tri-snRNP complex assembly. An N6-acetyllysine modification is found at Lys-214. The interval 247 to 317 (HLAGPEAEEW…GPGSERGPSV (71 aa)) is disordered.

Belongs to the TSSC4 family. In terms of assembly, interacts in a RNA-independent manner with distinct U5 snRNP-containing complexes, the mono-U5 snRNP and the post-splicing U5 snRNP-PRPF19 complex. Interacts with SNRNP200; the interaction is direct, excludes recruitment of C9ORF78 and WBP4 to SNRNP200 and negatively regulates its RNA helicase activity. Interacts with PRPF8; the interaction is direct.

Its subcellular location is the nucleus. The protein resides in the cytoplasm. Functionally, protein associated with the U5 snRNP, during its maturation and its post-splicing recycling and which is required for spliceosomal tri-snRNP complex assembly in the nucleus. Has a molecular sequestering activity and transiently hinders SNRNP200 binding sites for constitutive splicing factors that intervene later during the assembly of the spliceosome and splicing. Together with its molecular sequestering activity, may also function as a molecular adapter and placeholder, coordinating the assembly of the U5 snRNP and its association with the U4/U6 di-snRNP. The polypeptide is U5 small nuclear ribonucleoprotein TSSC4 (Rattus norvegicus (Rat)).